Here is a 116-residue protein sequence, read N- to C-terminus: Glycine-rich protein 3 short isoform (116 aa).

The first 24 residues, 1-24 (MASKTLLLLGLFAFLFIVSEMAAA), serve as a signal peptide directing secretion. Residues 27-83 (VKSESEETVKPEQHGGGFGDNGGGRYQGGGGHGGHGGGGYQGGGGRYQGGGGRQGGG) are disordered. The segment covering 29–39 (SESEETVKPEQ) has biased composition (basic and acidic residues). The span at 40–83 (HGGGFGDNGGGRYQGGGGHGGHGGGGYQGGGGRYQGGGGRQGGG) shows a compositional bias: gly residues. Repeat copies occupy residues 54 to 59 (GGGGHG), 62 to 67 (GGGGYQ), 68 to 73 (GGGGRY), 75 to 80 (GGGGRQ), and 81 to 86 (GGGGSY). Residues 54–86 (GGGGHGGHGGGGYQGGGGRYQGGGGRQGGGGSY) form a 5 X 6 AA tandem repeats of G-G-G-G-[HYRS]-[GYQ] region.

It belongs to the GRP family. As to quaternary structure, interacts with WAK1 (via the extracellular domain). Component of a 500 kDa complex, composed of GRP3 or GRP3-S, WAK1 and KAPP.

It is found in the secreted. It localises to the extracellular space. The protein localises to the extracellular matrix. Regulates the function of the receptor protein kinase WAK1. The chain is Glycine-rich protein 3 short isoform (GRP3S) from Arabidopsis thaliana (Mouse-ear cress).